The primary structure comprises 39 residues: Photosystem II reaction center protein L (39 aa).

A helical transmembrane segment spans residues 18 to 38 (SLYLGLLLIAVLGILFSSYFF).

The protein belongs to the PsbL family. As to quaternary structure, PSII is composed of 1 copy each of membrane proteins PsbA, PsbB, PsbC, PsbD, PsbE, PsbF, PsbH, PsbI, PsbJ, PsbK, PsbL, PsbM, PsbT, PsbX, PsbY, PsbZ, Psb30/Ycf12, peripheral proteins PsbO, CyanoQ (PsbQ), PsbU, PsbV and a large number of cofactors. It forms dimeric complexes.

The protein localises to the cellular thylakoid membrane. In terms of biological role, one of the components of the core complex of photosystem II (PSII). PSII is a light-driven water:plastoquinone oxidoreductase that uses light energy to abstract electrons from H(2)O, generating O(2) and a proton gradient subsequently used for ATP formation. It consists of a core antenna complex that captures photons, and an electron transfer chain that converts photonic excitation into a charge separation. This subunit is found at the monomer-monomer interface and is required for correct PSII assembly and/or dimerization. The sequence is that of Photosystem II reaction center protein L from Crocosphaera subtropica (strain ATCC 51142 / BH68) (Cyanothece sp. (strain ATCC 51142)).